Here is a 339-residue protein sequence, read N- to C-terminus: Coproporphyrin III ferrochelatase (339 aa).

2 residues coordinate Fe-coproporphyrin III: Ser-52 and Tyr-121. The Fe(2+) site is built by His-181 and Glu-264.

This sequence belongs to the ferrochelatase family.

Its subcellular location is the cytoplasm. The catalysed reaction is Fe-coproporphyrin III + 2 H(+) = coproporphyrin III + Fe(2+). It functions in the pathway porphyrin-containing compound metabolism; protoheme biosynthesis. In terms of biological role, involved in coproporphyrin-dependent heme b biosynthesis. Catalyzes the insertion of ferrous iron into coproporphyrin III to form Fe-coproporphyrin III. The sequence is that of Coproporphyrin III ferrochelatase from Mycolicibacterium vanbaalenii (strain DSM 7251 / JCM 13017 / BCRC 16820 / KCTC 9966 / NRRL B-24157 / PYR-1) (Mycobacterium vanbaalenii).